Here is a 318-residue protein sequence, read N- to C-terminus: Adenylate isopentenyltransferase 4 (318 aa).

12 to 19 lines the ATP pocket; that stretch reads GATGSGKS.

The protein belongs to the IPP transferase family. Mg(2+) is required as a cofactor. As to expression, expressed in immature seeds with highest expression in the chalazal endosperm.

It localises to the cytoplasm. The enzyme catalyses dimethylallyl diphosphate + ADP = N(6)-(dimethylallyl)adenosine 5'-diphosphate + diphosphate. It catalyses the reaction dimethylallyl diphosphate + ATP = N(6)-(dimethylallyl)adenosine 5'-triphosphate + diphosphate. In terms of biological role, involved in cytokinin biosynthesis. Catalyzes the transfer of an isopentenyl group from dimethylallyl diphosphate (DMAPP) to ATP and ADP, but not to AMP. Has no DMAPP:tRNA isopentenyltransferase activity. This Arabidopsis thaliana (Mouse-ear cress) protein is Adenylate isopentenyltransferase 4 (IPT4).